The primary structure comprises 436 residues: Prenyltransferase nscD (436 aa).

Belongs to the tryptophan dimethylallyltransferase family.

The protein operates within secondary metabolite biosynthesis. Its function is as follows. Prenyltransferase; part of the gene cluster that mediates the biosynthesis of neosartoricin B, a prenylated anthracenone that probably exhibits T-cell antiproliferative activity, suggestive of a physiological role as an immunosuppressive agent. The non-reducing polyketide synthase nscA probably synthesizes and cyclizes the decaketide backbone. The hydrolase nscB then mediates the product release through hydrolysis followed by spontaneous decarboxylation. The prenyltransferase nscD catalyzes the addition of the dimethylallyl group to the aromatic C5. The FAD-dependent monooxygenase nscC is then responsible for the stereospecific hydroxylation at C2. Neosartoricin B can be converted into two additional compounds neosartoricins C and D. Neosartoricin C is a spirocyclic compound that is cyclized through the attack of C3 hydroxyl on C14, followed by dehydration. On the other hand, neosartoricin D is a further cyclized compound in which attack of C2 on C14 in neosartoricin C results in the formation of the acetal-containing dioxabicyclo-octanone ring. Both of these compounds are novel and possibly represent related metabolites of the gene cluster. In Trichophyton tonsurans (strain CBS 112818) (Scalp ringworm fungus), this protein is Prenyltransferase nscD.